A 305-amino-acid chain; its full sequence is tRNA pseudouridine synthase B (305 aa).

The active-site Nucleophile is the aspartate 39.

It belongs to the pseudouridine synthase TruB family. Type 1 subfamily.

It carries out the reaction uridine(55) in tRNA = pseudouridine(55) in tRNA. Functionally, responsible for synthesis of pseudouridine from uracil-55 in the psi GC loop of transfer RNAs. This chain is tRNA pseudouridine synthase B, found in Staphylococcus aureus (strain MW2).